Reading from the N-terminus, the 250-residue chain is NADH-quinone oxidoreductase subunit C (250 aa).

Disordered stretches follow at residues 1–33 (MSDDSSDVKPGPKGPEQPAVEQSPENVPAPTGE) and 228–250 (LGGVPVEYKGGTVPPPDQRRSYN).

The protein belongs to the complex I 30 kDa subunit family. NDH-1 is composed of 14 different subunits. Subunits NuoB, C, D, E, F, and G constitute the peripheral sector of the complex.

It localises to the cell membrane. It carries out the reaction a quinone + NADH + 5 H(+)(in) = a quinol + NAD(+) + 4 H(+)(out). In terms of biological role, NDH-1 shuttles electrons from NADH, via FMN and iron-sulfur (Fe-S) centers, to quinones in the respiratory chain. The immediate electron acceptor for the enzyme in this species is believed to be a menaquinone. Couples the redox reaction to proton translocation (for every two electrons transferred, four hydrogen ions are translocated across the cytoplasmic membrane), and thus conserves the redox energy in a proton gradient. The chain is NADH-quinone oxidoreductase subunit C from Nocardioides sp. (strain ATCC BAA-499 / JS614).